Consider the following 1510-residue polypeptide: Chromosome partition protein MukB (1510 aa).

Position 75–82 (75–82 (GGNGAGKS)) interacts with ATP. Positions 346–706 (QHRLVDLSRE…LDEQISRLSQ (361 aa)) form a coiled coil. Positions 707–824 (PDGSEDPRLN…EIPLFGCAAR (118 aa)) are flexible hinge. Coiled coils occupy residues 825 to 1154 (EKRL…AAKV) and 1248 to 1304 (IDAI…LQNI).

Belongs to the SMC family. MukB subfamily. In terms of assembly, homodimerization via its hinge domain. Binds to DNA via its C-terminal region. Interacts, and probably forms a ternary complex, with MukE and MukF via its C-terminal region. The complex formation is stimulated by calcium or magnesium. Interacts with tubulin-related protein FtsZ.

The protein resides in the cytoplasm. It is found in the nucleoid. In terms of biological role, plays a central role in chromosome condensation, segregation and cell cycle progression. Functions as a homodimer, which is essential for chromosome partition. Involved in negative DNA supercoiling in vivo, and by this means organize and compact chromosomes. May achieve or facilitate chromosome segregation by condensation DNA from both sides of a centrally located replisome during cell division. This chain is Chromosome partition protein MukB, found in Haemophilus influenzae (strain ATCC 51907 / DSM 11121 / KW20 / Rd).